We begin with the raw amino-acid sequence, 149 residues long: Transcriptional repressor NrdR (149 aa).

The segment at 3 to 34 (CPFCGFEESKVVDSRSTDDNTTIRRRRECLKC) is a zinc-finger region. Positions 49-139 (ILVIKKDLTR…VYRQFKDIDT (91 aa)) constitute an ATP-cone domain.

Belongs to the NrdR family. Requires Zn(2+) as cofactor.

Negatively regulates transcription of bacterial ribonucleotide reductase nrd genes and operons by binding to NrdR-boxes. The chain is Transcriptional repressor NrdR from Clostridium beijerinckii (strain ATCC 51743 / NCIMB 8052) (Clostridium acetobutylicum).